The primary structure comprises 231 residues: Eukaryotic translation initiation factor 4E-1 (231 aa).

EIF4G-binding regions lie at residues 56–59 (HPLE) and 66–102 (FDNP…NNIH). MRNA is bound by residues 74–79 (RQTAWG), lysine 106, and 124–125 (WE). Cysteine 129 and cysteine 167 are disulfide-bonded. Residues 150–159 (YTLLAMIGHQ) are EIF4G-binding. MRNA is bound by residues 174–179 (RAKGEK) and 219–223 (KRLDR).

Belongs to the eukaryotic initiation factor 4E family. In terms of assembly, EIF4F is a multi-subunit complex, the composition of which varies with external and internal environmental conditions. It is composed of at least EIF4A, EIF4E and EIF4G. EIF4E is also known to interact with other partners. In higher plants two isoforms of EIF4F have been identified, named isoform EIF4F and isoform EIF(iso)4F. Isoform EIF4F has subunits p220 and p26, whereas isoform EIF(iso)4F has subunits p82 and p28. As to quaternary structure, (Microbial infection) Interacts with potyvirus viral genome-linked protein (VPg); mostly with tobacco etch virus (TEV-HAT) VPg and, to a lower extent, with potato virus Y (PVY-LYE84 and PVY-LYE90) and pepper mottle virus (PepMoV) VPg. In terms of processing, according to the redox status, the Cys-129-Cys-167 disulfide bridge may have a role in regulating protein function by affecting its ability to bind capped mRNA.

It localises to the nucleus. The protein localises to the cytoplasm. Its function is as follows. Component of the protein complex eIF4F, which is involved in the recognition of the mRNA cap, ATP-dependent unwinding of 5'-terminal secondary structure and recruitment of mRNA to the ribosome. Recognizes and binds the 7-methylguanosine-containing mRNA cap during an early step in the initiation of protein synthesis and facilitates ribosome binding by inducing the unwinding of the mRNAs secondary structures. Key component of recessive resistance to potyviruses. Functionally, (Microbial infection) Susceptibility host factor required for viral infection (e.g. potato virus Y (PVY), pepper mottle virus (PepMoV) and tobacco etch virus (TEV)) by recruiting viral RNAs to the host ribosomal complex via an interaction with viral genome-linked protein (VPg). This Solanum lycopersicum (Tomato) protein is Eukaryotic translation initiation factor 4E-1.